The primary structure comprises 947 residues: Bifunctional glutamine synthetase adenylyltransferase/adenylyl-removing enzyme (947 aa).

Positions 1–440 (MTPLSSPLSQ…VFNELIGDDE (440 aa)) are adenylyl removase. Residues 450–947 (SEPWREVWQD…ASWRKWLVAV (498 aa)) are adenylyl transferase.

This sequence belongs to the GlnE family. Mg(2+) is required as a cofactor.

The enzyme catalyses [glutamine synthetase]-O(4)-(5'-adenylyl)-L-tyrosine + phosphate = [glutamine synthetase]-L-tyrosine + ADP. It catalyses the reaction [glutamine synthetase]-L-tyrosine + ATP = [glutamine synthetase]-O(4)-(5'-adenylyl)-L-tyrosine + diphosphate. Its function is as follows. Involved in the regulation of glutamine synthetase GlnA, a key enzyme in the process to assimilate ammonia. When cellular nitrogen levels are high, the C-terminal adenylyl transferase (AT) inactivates GlnA by covalent transfer of an adenylyl group from ATP to specific tyrosine residue of GlnA, thus reducing its activity. Conversely, when nitrogen levels are low, the N-terminal adenylyl removase (AR) activates GlnA by removing the adenylyl group by phosphorolysis, increasing its activity. The regulatory region of GlnE binds the signal transduction protein PII (GlnB) which indicates the nitrogen status of the cell. The sequence is that of Bifunctional glutamine synthetase adenylyltransferase/adenylyl-removing enzyme from Salmonella agona (strain SL483).